Reading from the N-terminus, the 465-residue chain is Pre-mRNA-splicing factor URN1 (465 aa).

Residues 1 to 32 (MRGEWQEFKTPAGKKYYYNKNTKQSRWEKPNL) enclose the WW domain. Disordered stretches follow at residues 28–49 (EKPN…QTER), 144–198 (ERKD…VNQD), and 266–288 (ERSG…DSEV). A Phosphoserine modification is found at Ser-150. The segment covering 160–175 (LQESHTGLVSGYGSSS) has biased composition (polar residues). The span at 176–192 (GEEDEEEDEEEDEENEE) shows a compositional bias: acidic residues. The FF domain maps to 212–266 (DIDERNIFFELFDRYKLDKFSTWSLQSKKIENDPDFYKIRDDTVRESLFEEWCGE). Positions 274 to 288 (EESDSEDNSEDDSEV) are enriched in acidic residues.

In terms of assembly, component of the precatalytic spliceosomal complex B. Interacts with PRP19.

The protein resides in the nucleus. Functionally, component of the spliceosome involved in mRNA processing. The chain is Pre-mRNA-splicing factor URN1 (URN1) from Saccharomyces cerevisiae (strain ATCC 204508 / S288c) (Baker's yeast).